We begin with the raw amino-acid sequence, 340 residues long: Aurora kinase A- and ninein-interacting protein (340 aa).

Positions glutamine 175–histidine 340 are interaction with AURKA. The segment covering alanine 178–threonine 190 has biased composition (basic and acidic residues). Residues alanine 178–proline 209 form a disordered region. An interaction with RBBP8/CtIP region spans residues arginine 266 to histidine 340. The residue at position 277 (serine 277) is a Phosphoserine. Residues aspartate 293–proline 317 form a disordered region. Residues asparagine 296 to glycine 313 show a composition bias toward polar residues.

Belongs to the AUNIP family. As to quaternary structure, interacts (via C-terminus) with AURKA (via C-terminus). Interacts (via N-terminus) with NIN; this interaction blocks NIN phosphorylation by both AURKA and GSK3B. Identified in a complex with NIN and AURKA. Interacts with RBBP8/CtIP.

It is found in the nucleus. The protein resides in the chromosome. Its subcellular location is the cytoplasm. The protein localises to the cytoskeleton. It localises to the microtubule organizing center. It is found in the centrosome. The protein resides in the spindle pole. Functionally, DNA-binding protein that accumulates at DNA double-strand breaks (DSBs) following DNA damage and promotes DNA resection and homologous recombination. Serves as a sensor of DNA damage: binds DNA with a strong preference for DNA substrates that mimic structures generated at stalled replication forks, and anchors RBBP8/CtIP to DSB sites to promote DNA end resection and ensuing homologous recombination repair. Inhibits non-homologous end joining (NHEJ). Required for the dynamic movement of AURKA at the centrosomes and spindle apparatus during the cell cycle. This is Aurora kinase A- and ninein-interacting protein from Mus musculus (Mouse).